Here is an 859-residue protein sequence, read N- to C-terminus: Mycobactin import ATP-binding/permease protein IrtA (859 aa).

Residues 1–292 (MARGLQGVML…SRLLAPLKLP (292 aa)) are Cytoplasmic-facing. Residues 15–122 (ARDHTATVIE…MSLMGSSRFD (108 aa)) enclose the FAD-binding FR-type domain. FAD-binding positions include 70-73 (RAYT), 87-91 (DVVLH), and 97-98 (AS). Positions 247-267 (HRATEPAATEPEVGAAPQPES) are disordered. The chain crosses the membrane as a helical span at residues 293–313 (LVLSGVLAALVTLAQLAPFVL). The ABC transmembrane type-1 domain occupies 293–575 (LVLSGVLAAL…IAYGLGGLRT (283 aa)). Residues 314–334 (LVELSRLLVSGAGAHRLFTVG) are Periplasmic-facing. Residues 335 to 355 (FAAVGLLGTGALLAAALTLWL) form a helical membrane-spanning segment. Residues 356-408 (HVIDARFARALRLRLLSKLSRLPLGWFTSRGSGSIKKLVTDDTLALHYLVTHA) are Cytoplasmic-facing. A helical transmembrane segment spans residues 409–429 (VPDAVAAVVAPVGVLVYLFVV). Over 430–432 (DWR) the chain is Periplasmic. Residues 433–453 (VALVLFGPVLVYLTITSSLTI) form a helical membrane-spanning segment. Residues 454-519 (QSGPRIVQAQ…PLAGKKTLMD (66 aa)) lie on the Cytoplasmic side of the membrane. A helical membrane pass occupies residues 520 to 540 (LATRPATFLWLIAATGTLLVA). The Periplasmic portion of the chain corresponds to 541-548 (THRMDPVN). The helical transmembrane segment at 549-569 (LLPFMFLGTTFGARLLGIAYG) threads the bilayer. Topologically, residues 570–859 (LGGLRTGLLA…AVAAAQDGTR (290 aa)) are cytoplasmic. In terms of domain architecture, ABC transporter spans 610 to 843 (VVFDHVTFGY…GGRYCRLWDT (234 aa)). 643–650 (GPSGSGKS) provides a ligand contact to ATP.

The protein belongs to the ABC transporter superfamily. Siderophore-Fe(3+) uptake transporter (SIUT) (TC 3.A.1.21) family. Forms a heterodimer with IrtB. FAD serves as cofactor.

It localises to the cell inner membrane. Its function is as follows. Part of the ABC transporter complex IrtAB involved in the import of iron-bound mycobactin (Fe-MBT) and carboxymycobactin (Fe-cMBT). Mycobactins are then reduced by the siderophore interaction domain to facilitate iron release in the bacterial cell. Transmembrane domains (TMD) form a pore in the membrane and the ATP-binding domain (NBD) is responsible for energy generation. Required for replication in human macrophages and in mouse lungs. This chain is Mycobactin import ATP-binding/permease protein IrtA (irtA), found in Mycobacterium tuberculosis (strain ATCC 25618 / H37Rv).